The chain runs to 280 residues: MAPSGSLAVPLAVLVLLLWGAPWTHGRRSNVRVITDENWRELLEGDWMIEFYAPWCPACQNLQPEWESFAEWGEDLEVNIAKVDVTEQPGLSGRFIITALPTIYHCKDGEFRRYQGPRTKKDFINFISDKEWKSIEPVSSWFGPGSVLMSSMSALFQLSMWIRTCHNYFIEDLGLPVWGSYTVFALATLFSGLLLGLCMIFVADCLCPSKRRRPQPYPYPSKKLLSESAQPLKKVEEEQEADEEDVSEEEAESKEGTNKDFPQNAIRQRSLGPSLATDKS.

The N-terminal stretch at 1–26 (MAPSGSLAVPLAVLVLLLWGAPWTHG) is a signal peptide. One can recognise a Thioredoxin domain in the interval 27–132 (RRSNVRVITD…FINFISDKEW (106 aa)). Topologically, residues 27 to 180 (RRSNVRVITD…EDLGLPVWGS (154 aa)) are extracellular. Residues C56 and C59 each act as nucleophile in the active site. Cysteines 56 and 59 form a disulfide. Residues 181–203 (YTVFALATLFSGLLLGLCMIFVA) traverse the membrane as a helical segment. Residues 204 to 280 (DCLCPSKRRR…LGPSLATDKS (77 aa)) are Cytoplasmic-facing. 2 S-palmitoyl cysteine lipidation sites follow: C205 and C207. Residues 218 to 280 (PYPSKKLLSE…LGPSLATDKS (63 aa)) form a disordered region. Phosphoserine occurs at positions 228, 247, 270, 274, and 280. A compositionally biased stretch (acidic residues) spans 237 to 252 (EEQEADEEDVSEEEAE).

Interacts with ATP2A2. Palmitoylated; palmitoylation is required for localization to mitochondria-associated endoplasmic reticulum membrane (MAM). In terms of tissue distribution, ubiquitous. Highly expressed in kidney, liver, placenta and lung.

Its subcellular location is the endoplasmic reticulum membrane. The protein localises to the mitochondrion membrane. It is found in the secreted. It carries out the reaction Catalyzes the rearrangement of -S-S- bonds in proteins.. Thiredoxin domain-containing protein that participates in various redox reactions through the reversible oxidation of its active center dithiol to a disulfide and catalyze dithiol-disulfide exchange reactions. Acts as a key inhibitor of the alternative triglyceride biosynthesis pathway by inhibiting the activity of TMEM68/DIESL at the endoplasmic reticulum, thereby restricting accumulation of triacylglycerol. The alternative triglyceride biosynthesis pathway mediates formation of triacylglycerol from diacylglycerol and membrane phospholipids. Acts as a protein disulfide isomerase by catalyzing formation or reduction of disulfide bonds. Specifically mediates formation of disulfide bonds of transmembrane proteins at the endoplasmic reticulum membrane. Involved in endoplasmic reticulum-associated degradation (ERAD) via its protein disulfide isomerase activity by acting on folding-defective polypeptides at the endoplasmic reticulum membrane. Acts as a negative regulator of platelet aggregation following secretion in the extracellular space. Acts as a regulator of endoplasmic reticulum-mitochondria contact sites via its ability to regulate redox signals. Regulates endoplasmic reticulum-mitochondria Ca(2+) flux. In Homo sapiens (Human), this protein is Thioredoxin-related transmembrane protein 1.